We begin with the raw amino-acid sequence, 388 residues long: Basigin (388 aa).

The N-terminal stretch at 1-21 (MAAGADVPCAVLALLVLGSLA) is a signal peptide. Residues 27–323 (TAGFIKSPLS…SGSATVNLRV (297 aa)) are Extracellular-facing. The Ig-like domain occupies 43-131 (DSVELHCEAV…NHLSKSPKVK (89 aa)). 2 disulfide bridges follow: C49–C113 and C162–C211. In terms of domain architecture, Ig-like C2-type spans 143 to 218 (ERPVITGQYS…YECIYNTNPV (76 aa)). N163, N222, N280, N286, and N307 each carry an N-linked (GlcNAc...) asparagine glycan. Positions 229–323 (PQVVAYKKSE…SGSATVNLRV (95 aa)) constitute an Ig-like V-type domain. C250 and C306 are joined by a disulfide. The helical transmembrane segment at 324-344 (RSRLAALWPFLGIVAEVLVLV) threads the bilayer. At 345 to 388 (TIIFIYEKRRKPDEVLDDDDGGSAPLKSNATNHKDKNVRQRNAN) the chain is on the cytoplasmic side. The segment at 358 to 388 (EVLDDDDGGSAPLKSNATNHKDKNVRQRNAN) is disordered.

Interacts with NXNL1, SLC2A1 and SLC16A1. Post-translationally, N-glycosylated. In terms of tissue distribution, retinal cone photoreceptors (at protein level). As to expression, brain endothelial cells, kidney epithelial cells and erythroblasts (at protein level).

It is found in the cell membrane. It localises to the photoreceptor inner segment. The protein resides in the cell projection. Its subcellular location is the cilium. The protein localises to the photoreceptor outer segment. It is found in the endoplasmic reticulum membrane. It localises to the basolateral cell membrane. Functionally, essential for normal retinal maturation and development. Acts as a retinal cell surface receptor for NXNL1 and plays an important role in NXNL1-mediated survival of retinal cone photoreceptors. In association with glucose transporter SLC16A1/GLUT1 and NXNL1, promotes retinal cone survival by enhancing aerobic glycolysis and accelerating the entry of glucose into photoreceptors. In terms of biological role, signaling receptor for cyclophilins, essential for PPIA/CYPA and PPIB/CYPB-dependent signaling related to chemotaxis and adhesion of immune cells. Plays an important role in targeting the monocarboxylate transporters SLC16A1/GLUT1, SLC16A3, SLC16A8, SLC16A11 and SLC16A12 to the plasma membrane. Acts as a coreceptor for vascular endothelial growth factor receptor 2 (KDR/VEGFR2) in endothelial cells enhancing its VEGFA-mediated activation and downstream signaling. Promotes angiogenesis through EPAS1/HIF2A-mediated up-regulation of VEGFA and KDR/VEGFR2 in endothelial cells. The protein is Basigin (BSG) of Gallus gallus (Chicken).